A 77-amino-acid polypeptide reads, in one-letter code: NADH dehydrogenase [ubiquinone] 1 alpha subcomplex subunit 3 (77 aa).

A helical membrane pass occupies residues 23–45 (IVGGSALALAGIVMATIGVANYY).

It belongs to the complex I NDUFA3 subunit family. Complex I is composed of 43 different subunits.

It is found in the mitochondrion inner membrane. The protein localises to the cytoplasm. It localises to the myofibril. Its subcellular location is the sarcomere. The protein resides in the z line. Accessory subunit of the mitochondrial membrane respiratory chain NADH dehydrogenase (Complex I), that is believed not to be involved in catalysis. Complex I functions in the transfer of electrons from NADH to the respiratory chain. The immediate electron acceptor for the enzyme is believed to be ubiquinone. Required for the maintenance of muscle integrity and for cell proliferation in the wing imaginal disc epithelium, possibly by interacting with the chaperone-assisted selective autophagy (CASA) pathway. This chain is NADH dehydrogenase [ubiquinone] 1 alpha subcomplex subunit 3, found in Drosophila melanogaster (Fruit fly).